Here is a 313-residue protein sequence, read N- to C-terminus: NADH-ubiquinone oxidoreductase chain 1 (313 aa).

Helical transmembrane passes span 6 to 26, 31 to 51, 62 to 82, 84 to 104, 109 to 129, 142 to 162, 183 to 203, 216 to 235, 250 to 270, and 286 to 306; these read IIII…FVSL, ILAL…ILTP, FIIF…IITA, CIFL…DTGF, MLCV…CFLF, MFFS…IYSL, FYIA…LDGL, LVAG…YSVL, LCFG…FGFF, and AFIL…LFTT.

The protein belongs to the complex I subunit 1 family.

Its subcellular location is the mitochondrion inner membrane. It catalyses the reaction a ubiquinone + NADH + 5 H(+)(in) = a ubiquinol + NAD(+) + 4 H(+)(out). Core subunit of the mitochondrial membrane respiratory chain NADH dehydrogenase (Complex I) that is believed to belong to the minimal assembly required for catalysis. Complex I functions in the transfer of electrons from NADH to the respiratory chain. The immediate electron acceptor for the enzyme is believed to be ubiquinone. The protein is NADH-ubiquinone oxidoreductase chain 1 (ND1) of Leishmania tarentolae (Sauroleishmania tarentolae).